The following is a 240-amino-acid chain: ATP-dependent dethiobiotin synthetase BioD (240 aa).

An ATP-binding site is contributed by 15 to 20 (EIGKTF). Thr19 serves as a coordination point for Mg(2+). The active site involves Lys40. Residues Asp57, 118 to 121 (EGVG), and 178 to 179 (NR) contribute to the ATP site. Mg(2+) contacts are provided by Asp57 and Glu118.

The protein belongs to the dethiobiotin synthetase family. As to quaternary structure, homodimer. It depends on Mg(2+) as a cofactor.

Its subcellular location is the cytoplasm. It carries out the reaction (7R,8S)-7,8-diammoniononanoate + CO2 + ATP = (4R,5S)-dethiobiotin + ADP + phosphate + 3 H(+). It functions in the pathway cofactor biosynthesis; biotin biosynthesis; biotin from 7,8-diaminononanoate: step 1/2. In terms of biological role, catalyzes a mechanistically unusual reaction, the ATP-dependent insertion of CO2 between the N7 and N8 nitrogen atoms of 7,8-diaminopelargonic acid (DAPA, also called 7,8-diammoniononanoate) to form a ureido ring. In Burkholderia pseudomallei (strain 1106a), this protein is ATP-dependent dethiobiotin synthetase BioD.